Reading from the N-terminus, the 357-residue chain is Velvet complex subunit 2 (357 aa).

Residues 32-341 (RRAERKYKLE…AQQGIKIPIR (310 aa)) enclose the Velvet domain.

Belongs to the velvet family. VelB subfamily. Component of the heterotrimeric velvet complex composed of LAE1, VEL1 and VEL2; VEL1A acting as a bridging protein between LAE1 and VEL2. Forms a heterodimeric complex with VOS1; the formation of the VEL2-VOS1 complex is light-dependent.

The protein resides in the nucleus. Its subcellular location is the cytoplasm. Its function is as follows. Component of the velvet transcription factor complex that controls sexual/asexual developmental ratio in response to light, promoting sexual development in the darkness while stimulating asexual sporulation under illumination. The velvet complex acts as a global regulator for secondary metabolite gene expression. Component of the VEL2-VOS1 heterodimeric complex that plays a dual role in activating genes associated with spore maturation and repressing certain development-associated genes. The complex binds DNA through the DNA-binding domain of VOS1 that recognizes an 11-nucleotide consensus sequence 5'-CTGGCCGCGGC-3' consisting of two motifs in the promoters of key developmental regulatory genes. The VEL2-VOS1 complex is required for normal pseudothecium development and regulates asexual spore compartmentalization, pigmentation and germination. This Cochliobolus heterostrophus (strain C5 / ATCC 48332 / race O) (Southern corn leaf blight fungus) protein is Velvet complex subunit 2.